A 245-amino-acid chain; its full sequence is 1-(5-phosphoribosyl)-5-[(5-phosphoribosylamino)methylideneamino] imidazole-4-carboxamide isomerase (245 aa).

The active-site Proton acceptor is aspartate 8. Aspartate 129 (proton donor) is an active-site residue.

It belongs to the HisA/HisF family.

Its subcellular location is the cytoplasm. The catalysed reaction is 1-(5-phospho-beta-D-ribosyl)-5-[(5-phospho-beta-D-ribosylamino)methylideneamino]imidazole-4-carboxamide = 5-[(5-phospho-1-deoxy-D-ribulos-1-ylimino)methylamino]-1-(5-phospho-beta-D-ribosyl)imidazole-4-carboxamide. Its pathway is amino-acid biosynthesis; L-histidine biosynthesis; L-histidine from 5-phospho-alpha-D-ribose 1-diphosphate: step 4/9. The polypeptide is 1-(5-phosphoribosyl)-5-[(5-phosphoribosylamino)methylideneamino] imidazole-4-carboxamide isomerase (Rhodopseudomonas palustris (strain ATCC BAA-98 / CGA009)).